We begin with the raw amino-acid sequence, 211 residues long: Ceramide-1-phosphate transfer protein (211 aa).

5 residues coordinate an N-acylsphingoid base 1-phosphate: Asp53, Lys57, Arg103, Arg107, and His147.

The protein belongs to the GLTP family.

The protein localises to the cytoplasm. It localises to the cytosol. It is found in the golgi apparatus. The protein resides in the trans-Golgi network membrane. Its subcellular location is the cell membrane. The protein localises to the endosome membrane. It localises to the nucleus outer membrane. It carries out the reaction N-(hexadecanoyl)-sphing-4-enine-1-phosphate(in) = N-(hexadecanoyl)-sphing-4-enine-1-phosphate(out). The enzyme catalyses N-(9Z-octadecenoyl)-sphing-4-enine-1-phosphate(in) = N-(9Z-octadecenoyl)-sphing-4-enine-1-phosphate(out). Functionally, mediates the intracellular transfer of ceramide-1-phosphate (C1P) between organelle membranes and the cell membrane. Required for normal structure of the Golgi stacks. Can bind phosphoceramides with a variety of aliphatic chains, but has a preference for lipids with saturated C16:0 or monounsaturated C18:1 aliphatic chains, and is inefficient with phosphoceramides containing lignoceryl (C24:0). Plays a role in the regulation of the cellular levels of ceramide-1-phosphate, and thereby contributes to the regulation of phospholipase PLA2G4A activity and the release of arachidonic acid. Has no activity with galactosylceramide, lactosylceramide, sphingomyelin, phosphatidylcholine, phosphatidic acid and ceramide. C1P transfer is stimulated by phosphatidylserine in C1P source vesicles. Regulates autophagy and pyroptosis, but not apoptosis. The polypeptide is Ceramide-1-phosphate transfer protein (cptp) (Danio rerio (Zebrafish)).